Consider the following 433-residue polypeptide: MRALRDPICAIATPLGKGAIGVVRLSGEGALEIAARVWRGKDPRRLKGGRFTLGEVVDPKTGEAIDQALLLVFRAPRSYTGEDLVEFQTHGSLAVLRRVMEVLVAEGARPAGRGEFTFRAYMNGKLDLAQAEAVLALIEAEGELARRQALRALEGALSRRIEALENRLLDLLAHIQALLDYPEEGVEPLEAERTLREVLAEVEALLAQAKASRLAQKGARLALIGAPNAGKSSLLNALLGYERALVSPIPGTTRDYLEAPLELFGIPLVAVDTAGVRETEDPVERMGVERALRIAEEADLVLYVVDRSQPKPAPPPLPWARTLKVATKSDLPPAWEDPEFLPVSSLTGEGLGRLKEALREALLGREGGEVLLTERQVEALLRARERLEEALALPEDLMGLALEEAARALALLTGKEVAEEVVARVFQNFCVGK.

(6S)-5-formyl-5,6,7,8-tetrahydrofolate-binding residues include arginine 24, glutamate 86, and lysine 125. The TrmE-type G domain maps to glycine 218–leucine 363. Asparagine 228 serves as a coordination point for K(+). Residues asparagine 228–serine 233, serine 247–threonine 253, and aspartate 272–glycine 275 each bind GTP. Serine 232 lines the Mg(2+) pocket. Positions 247, 249, and 252 each coordinate K(+). Threonine 253 lines the Mg(2+) pocket. Residue lysine 433 coordinates (6S)-5-formyl-5,6,7,8-tetrahydrofolate.

The protein belongs to the TRAFAC class TrmE-Era-EngA-EngB-Septin-like GTPase superfamily. TrmE GTPase family. As to quaternary structure, homodimer. Heterotetramer of two MnmE and two MnmG subunits. K(+) is required as a cofactor.

It is found in the cytoplasm. Functionally, exhibits a very high intrinsic GTPase hydrolysis rate. Involved in the addition of a carboxymethylaminomethyl (cmnm) group at the wobble position (U34) of certain tRNAs, forming tRNA-cmnm(5)s(2)U34. The chain is tRNA modification GTPase MnmE from Thermus thermophilus (strain ATCC BAA-163 / DSM 7039 / HB27).